Consider the following 148-residue polypeptide: MIDVVEIQKILPHRFPFLLIDRVTELEPAKHIVAYKNVTIGEPIFQGHFPGHPIYPGVMIVEGMAQAGGVLAFKSMSDEHQADIENKVVYFMSIDKAKFRHPVRPGDRLEYRLEVLKHKGNIWVLDGKAYIDGNLCAEAELKAMIVDK.

His-48 is an active-site residue.

Belongs to the thioester dehydratase family. FabZ subfamily.

Its subcellular location is the cytoplasm. The enzyme catalyses a (3R)-hydroxyacyl-[ACP] = a (2E)-enoyl-[ACP] + H2O. Involved in unsaturated fatty acids biosynthesis. Catalyzes the dehydration of short chain beta-hydroxyacyl-ACPs and long chain saturated and unsaturated beta-hydroxyacyl-ACPs. The protein is 3-hydroxyacyl-[acyl-carrier-protein] dehydratase FabZ of Campylobacter curvus (strain 525.92).